Reading from the N-terminus, the 702-residue chain is Amino-acid racemase (702 aa).

At 1–12 (MKHRANGIDLFR) the chain is on the cytoplasmic side. A helical transmembrane segment spans residues 13 to 33 (IFAATMVVAIHTFPFQSIAPF). Topologically, residues 34–39 (LDEVIT) are extracellular. Residues 40–60 (LTVFRVAVPFFFMITGYFLLG) form a helical membrane-spanning segment. At 61 to 77 (RLSLNFSYNNNQRVKKY) the chain is on the cytoplasmic side. A helical membrane pass occupies residues 78–98 (LYKIGMIYLYSILLYFPLSLL). Residues 99 to 120 (NGTISLKMNILLLLKVFIFDGT) are Extracellular-facing. The helical transmembrane segment at 121-141 (FYHLWYFPASIIGTILVTLLL) threads the bilayer. Position 142 (arginine 142) is a topological domain, cytoplasmic. Residues 143 to 163 (SIGFKLTVAFSTCLYLVGLGG) traverse the membrane as a helical segment. The Extracellular portion of the chain corresponds to 164 to 191 (DSWYGITNQVPLLNKLYTFIFSWSDYTR). The chain crosses the membrane as a helical span at residues 192 to 212 (SGVFFTPVFLCLGIFAYRVSK). The Cytoplasmic segment spans residues 213 to 218 (KLTASK). A helical membrane pass occupies residues 219–239 (ILNLLFYVFIIGMTFESIFLH). The Extracellular portion of the chain corresponds to 240 to 248 (RFTNVKHDS). The chain crosses the membrane as a helical span at residues 249–269 (MYLLLPSCALILFLMLLNWQP). Residues 270–276 (KLKVKES) lie on the Cytoplasmic side of the membrane. Residues 277–297 (ADLTLLVYILHPLVIVIVHSI) form a helical membrane-spanning segment. Residues 298–307 (SKYIPILKNS) are Extracellular-facing. Residues 308 to 328 (LLNFLLVVVCSFILAQLLLNL) form a helical membrane-spanning segment. At 329 to 702 (KRKLRVSKQK…LGSRLGTELN (374 aa)) the chain is on the cytoplasmic side. Positions 337-702 (QKIPFERASK…LGSRLGTELN (366 aa)) are racemase. The active-site Proton acceptor is the lysine 375. Lysine 375 carries the N6-(pyridoxal phosphate)lysine modification. A substrate-binding site is contributed by arginine 469. Tyrosine 601 serves as the catalytic Proton acceptor. Methionine 650 lines the substrate pocket.

It in the N-terminal section; belongs to the acyltransferase 3 family. The protein in the C-terminal section; belongs to the alanine racemase family. Requires pyridoxal 5'-phosphate as cofactor.

The protein resides in the cell membrane. The protein is Amino-acid racemase (vanTE) of Enterococcus faecalis (Streptococcus faecalis).